A 353-amino-acid polypeptide reads, in one-letter code: Nicotinate-nucleotide--dimethylbenzimidazole phosphoribosyltransferase (353 aa).

Glu-319 (proton acceptor) is an active-site residue.

This sequence belongs to the CobT family.

It carries out the reaction 5,6-dimethylbenzimidazole + nicotinate beta-D-ribonucleotide = alpha-ribazole 5'-phosphate + nicotinate + H(+). It participates in nucleoside biosynthesis; alpha-ribazole biosynthesis; alpha-ribazole from 5,6-dimethylbenzimidazole: step 1/2. In terms of biological role, catalyzes the synthesis of alpha-ribazole-5'-phosphate from nicotinate mononucleotide (NAMN) and 5,6-dimethylbenzimidazole (DMB). This chain is Nicotinate-nucleotide--dimethylbenzimidazole phosphoribosyltransferase, found in Prosthecochloris aestuarii (strain DSM 271 / SK 413).